Reading from the N-terminus, the 499-residue chain is tRNA (guanine(37)-N(1))-methyltransferase (499 aa).

The transit peptide at 1-44 (MKIALPVFQKFNRLISSCKMSGVFPYNPPVNRQMRELDRSFFIT) directs the protein to the mitochondrion. Residues His-268, 307 to 308 (DL), 335 to 336 (DG), and Asn-399 each bind S-adenosyl-L-methionine.

This sequence belongs to the class I-like SAM-binding methyltransferase superfamily. TRM5/TYW2 family. As to quaternary structure, monomer.

It localises to the mitochondrion matrix. The protein localises to the nucleus. Its subcellular location is the cytoplasm. It catalyses the reaction guanosine(37) in tRNA + S-adenosyl-L-methionine = N(1)-methylguanosine(37) in tRNA + S-adenosyl-L-homocysteine + H(+). Specifically methylates the N1 position of guanosine-37 in various cytoplasmic and mitochondrial tRNAs. Methylation is not dependent on the nature of the nucleoside 5' of the target nucleoside. This is the first step in the biosynthesis of wybutosine (yW), a modified base adjacent to the anticodon of tRNAs and required for accurate decoding. Postspliced cytoplasmic tRNAs are imported into the nucleus, where this first step seems to take place, after which they are reexported to the cytoplasm, where the yW sythesis is completed by cytoplasmic enzymes. This Saccharomyces cerevisiae (strain ATCC 204508 / S288c) (Baker's yeast) protein is tRNA (guanine(37)-N(1))-methyltransferase.